Here is a 193-residue protein sequence, read N- to C-terminus: Imidazoleglycerol-phosphate dehydratase (193 aa).

Belongs to the imidazoleglycerol-phosphate dehydratase family.

It is found in the cytoplasm. It carries out the reaction D-erythro-1-(imidazol-4-yl)glycerol 3-phosphate = 3-(imidazol-4-yl)-2-oxopropyl phosphate + H2O. Its pathway is amino-acid biosynthesis; L-histidine biosynthesis; L-histidine from 5-phospho-alpha-D-ribose 1-diphosphate: step 6/9. This Metallosphaera sedula (strain ATCC 51363 / DSM 5348 / JCM 9185 / NBRC 15509 / TH2) protein is Imidazoleglycerol-phosphate dehydratase.